We begin with the raw amino-acid sequence, 99 residues long: DNA-directed RNA polymerase subunit omega (99 aa).

Low complexity predominate over residues 1 to 10; the sequence is MSSTSAASAA. The segment at 1–20 is disordered; it reads MSSTSAASAAGQGALPAYDT.

This sequence belongs to the RNA polymerase subunit omega family. As to quaternary structure, the RNAP catalytic core consists of 2 alpha, 1 beta, 1 beta' and 1 omega subunit. When a sigma factor is associated with the core the holoenzyme is formed, which can initiate transcription.

The enzyme catalyses RNA(n) + a ribonucleoside 5'-triphosphate = RNA(n+1) + diphosphate. Promotes RNA polymerase assembly. Latches the N- and C-terminal regions of the beta' subunit thereby facilitating its interaction with the beta and alpha subunits. This chain is DNA-directed RNA polymerase subunit omega, found in Rhodococcus erythropolis (strain PR4 / NBRC 100887).